A 314-amino-acid polypeptide reads, in one-letter code: Porphobilinogen deaminase (314 aa).

Residue C249 is modified to S-(dipyrrolylmethanemethyl)cysteine.

Belongs to the HMBS family. As to quaternary structure, monomer. It depends on dipyrromethane as a cofactor.

The enzyme catalyses 4 porphobilinogen + H2O = hydroxymethylbilane + 4 NH4(+). The protein operates within porphyrin-containing compound metabolism; protoporphyrin-IX biosynthesis; coproporphyrinogen-III from 5-aminolevulinate: step 2/4. Tetrapolymerization of the monopyrrole PBG into the hydroxymethylbilane pre-uroporphyrinogen in several discrete steps. The sequence is that of Porphobilinogen deaminase from Brucella anthropi (strain ATCC 49188 / DSM 6882 / CCUG 24695 / JCM 21032 / LMG 3331 / NBRC 15819 / NCTC 12168 / Alc 37) (Ochrobactrum anthropi).